The primary structure comprises 216 residues: Purine nucleoside phosphorylase DeoD-type (216 aa).

Phosphate is bound by residues Arg-4, Arg-23, and 67 to 70 (RVGT). Residues 159–161 (EME) and 183–184 (SD) each bind a purine D-ribonucleoside. Asp-184 serves as the catalytic Proton donor.

The protein belongs to the PNP/UDP phosphorylase family. Homohexamer; trimer of homodimers.

The catalysed reaction is a purine D-ribonucleoside + phosphate = a purine nucleobase + alpha-D-ribose 1-phosphate. The enzyme catalyses a purine 2'-deoxy-D-ribonucleoside + phosphate = a purine nucleobase + 2-deoxy-alpha-D-ribose 1-phosphate. Catalyzes the reversible phosphorolytic breakdown of the N-glycosidic bond in the beta-(deoxy)ribonucleoside molecules, with the formation of the corresponding free purine bases and pentose-1-phosphate. In Streptococcus thermophilus, this protein is Purine nucleoside phosphorylase DeoD-type.